The chain runs to 498 residues: Peptidase inhibitor 16 (498 aa).

A signal peptide spans Met-1–Ala-29. Residues Val-39 to Tyr-167 enclose the SCP domain. Asn-116 carries N-linked (GlcNAc...) asparagine glycosylation. Disordered stretches follow at residues Asn-204–Ser-277, Pro-317–Ser-407, and Glu-419–Glu-467. 2 stretches are compositionally biased toward polar residues: residues Val-218–Ser-277 and Leu-344–Gln-353. Over residues Pro-367–Glu-380 the composition is skewed to low complexity. A compositionally biased stretch (basic and acidic residues) spans Val-383–Ser-397. The span at Ser-437–Asn-447 shows a compositional bias: polar residues. The N-linked (GlcNAc...) asparagine glycan is linked to Asn-447.

This sequence belongs to the CRISP family. As to quaternary structure, interacts with PSP94/MSMB. N-glycosylated. Expressed strongly in aorta and skin, and weakly in adipose tissue (at protein level). In heart, found in the extracellular space surrounding cardiomyocytes (at protein level).

It is found in the secreted. May inhibit cardiomyocyte growth. The polypeptide is Peptidase inhibitor 16 (Pi16) (Mus musculus (Mouse)).